We begin with the raw amino-acid sequence, 261 residues long: Acetylglutamate kinase (261 aa).

Residues glycine 48–glycine 49, arginine 70, and asparagine 164 contribute to the substrate site.

It belongs to the acetylglutamate kinase family. ArgB subfamily.

The protein resides in the cytoplasm. The catalysed reaction is N-acetyl-L-glutamate + ATP = N-acetyl-L-glutamyl 5-phosphate + ADP. It functions in the pathway amino-acid biosynthesis; L-arginine biosynthesis; N(2)-acetyl-L-ornithine from L-glutamate: step 2/4. Its function is as follows. Catalyzes the ATP-dependent phosphorylation of N-acetyl-L-glutamate. This is Acetylglutamate kinase from Roseiflexus sp. (strain RS-1).